A 493-amino-acid chain; its full sequence is Guanosine-5'-triphosphate,3'-diphosphate pyrophosphatase (493 aa).

This sequence belongs to the GppA/Ppx family. GppA subfamily.

It carries out the reaction guanosine 3'-diphosphate 5'-triphosphate + H2O = guanosine 3',5'-bis(diphosphate) + phosphate + H(+). Its pathway is purine metabolism; ppGpp biosynthesis; ppGpp from GTP: step 2/2. Its function is as follows. Catalyzes the conversion of pppGpp to ppGpp. Guanosine pentaphosphate (pppGpp) is a cytoplasmic signaling molecule which together with ppGpp controls the 'stringent response', an adaptive process that allows bacteria to respond to amino acid starvation, resulting in the coordinated regulation of numerous cellular activities. In Salmonella agona (strain SL483), this protein is Guanosine-5'-triphosphate,3'-diphosphate pyrophosphatase.